A 461-amino-acid chain; its full sequence is L-seryl-tRNA(Sec) selenium transferase (461 aa).

Position 294 is an N6-(pyridoxal phosphate)lysine (Lys294).

Belongs to the SelA family. It depends on pyridoxal 5'-phosphate as a cofactor.

It is found in the cytoplasm. It catalyses the reaction L-seryl-tRNA(Sec) + selenophosphate + H(+) = L-selenocysteinyl-tRNA(Sec) + phosphate. It participates in aminoacyl-tRNA biosynthesis; selenocysteinyl-tRNA(Sec) biosynthesis; selenocysteinyl-tRNA(Sec) from L-seryl-tRNA(Sec) (bacterial route): step 1/1. Functionally, converts seryl-tRNA(Sec) to selenocysteinyl-tRNA(Sec) required for selenoprotein biosynthesis. The sequence is that of L-seryl-tRNA(Sec) selenium transferase from Actinobacillus pleuropneumoniae serotype 7 (strain AP76).